The chain runs to 171 residues: Translation initiation factor IF-3 (171 aa).

Belongs to the IF-3 family. Monomer.

It is found in the cytoplasm. In terms of biological role, IF-3 binds to the 30S ribosomal subunit and shifts the equilibrium between 70S ribosomes and their 50S and 30S subunits in favor of the free subunits, thus enhancing the availability of 30S subunits on which protein synthesis initiation begins. This is Translation initiation factor IF-3 from Halalkalibacterium halodurans (strain ATCC BAA-125 / DSM 18197 / FERM 7344 / JCM 9153 / C-125) (Bacillus halodurans).